Consider the following 224-residue polypeptide: MSKKALCIISGGMDSTLCAYLAKKEGYEIIALHFDYEQRTQEKERECFKQICKALKVEKSYILDVSFIKDIGGNALTDKSIDIPKNELCISDTPPITYVPFRNGIFLSIAGSLAEKENCESIFIGVVEEDGSGYPDCTDEFIQKAQEFINEGTSKNFKVYIKTPLVRLNKAKIVELALKENVPLELTWSCYESEDEACGECDSCLLRLRGFEKVGFKDKIKYKS.

9–19 (ISGGMDSTLCA) contributes to the ATP binding site. 4 residues coordinate Zn(2+): Cys-190, Cys-198, Cys-201, and Cys-204.

Belongs to the QueC family. Zn(2+) is required as a cofactor.

It carries out the reaction 7-carboxy-7-deazaguanine + NH4(+) + ATP = 7-cyano-7-deazaguanine + ADP + phosphate + H2O + H(+). The protein operates within purine metabolism; 7-cyano-7-deazaguanine biosynthesis. In terms of biological role, catalyzes the ATP-dependent conversion of 7-carboxy-7-deazaguanine (CDG) to 7-cyano-7-deazaguanine (preQ(0)). This is 7-cyano-7-deazaguanine synthase from Campylobacter jejuni subsp. jejuni serotype O:6 (strain 81116 / NCTC 11828).